The primary structure comprises 754 residues: MTILTHTLGFPRVGLRRELKKAQESYWAGNSTREALLAVGRELRARHWEQQKQAGIDLLPVGDFAWYDHVLTTSLLLGNVPARHQNNDGSVDIDTLFRIGRGRAPTGEPAAAAEMTKWFNTNYHYIVPEFSKGQQFRLTWTQLLEEVDEALALGHKIKPVLLGPVTYLWLGKVKGEPFDRLTLLKDILPVYQHVLAELAKRGIEWVQIDELALVLELPQAWLDAFKPAYDALAGQVKLLLTTYFEGVTPNLDTIIALPAQGLHVDLIHGKDDVAELHQRLPVDWLLSAGLINGRNVWRADLTEKYAQINALVGKRALWVASSCSLLHSPIDLSVETRLDTEVKSWFAFALQKCGELALLRDALNSGETAALEEWSAPIQARRHSRRVHNAAVEKRLAAITAQDSQRENPYEVRAEAQRARFKLPAWPTTTIGSFPQTTEIRGLRLDFKKGNLDANNYRTGIAEHIKQAIIEQERLGLDVLVHGEAERNDMVEYFGEHLDGFVFTQNGWVQSYGSRCVKPPVVIGDISRPAPITVEWAKYAQSLTDKPVKGMLTGPVTILCWSFPREDVTRETIAKQIALALRDEVADLEAAGIGIIQIDEPALREGLPLRRSDWDAYLEWGVEAFRINAAVAKDETQIHTHMCYCEFNDIMDSIVALDADVITIETSRSDMELLESFEAFDYPNEIGPGVYDIHSPNVPSVEWIEALLKKAAQRIPAQRLWVNPDCGLKTRGWPETRAALANMVKAAHNLRQAK.

5-methyltetrahydropteroyltri-L-glutamate is bound by residues R17 to K20 and K117. L-homocysteine is bound by residues I431–S433 and E484. L-methionine contacts are provided by residues I431–S433 and E484. Residues R515–C516 and W561 each bind 5-methyltetrahydropteroyltri-L-glutamate. Residue D599 participates in L-homocysteine binding. Residue D599 participates in L-methionine binding. E605 is a 5-methyltetrahydropteroyltri-L-glutamate binding site. Residues H641, C643, and E665 each contribute to the Zn(2+) site. The active-site Proton donor is H694. A Zn(2+)-binding site is contributed by C726.

Belongs to the vitamin-B12 independent methionine synthase family. Zn(2+) is required as a cofactor.

It catalyses the reaction 5-methyltetrahydropteroyltri-L-glutamate + L-homocysteine = tetrahydropteroyltri-L-glutamate + L-methionine. It participates in amino-acid biosynthesis; L-methionine biosynthesis via de novo pathway; L-methionine from L-homocysteine (MetE route): step 1/1. In terms of biological role, catalyzes the transfer of a methyl group from 5-methyltetrahydrofolate to homocysteine resulting in methionine formation. This is 5-methyltetrahydropteroyltriglutamate--homocysteine methyltransferase from Salmonella paratyphi A (strain ATCC 9150 / SARB42).